The following is a 142-amino-acid chain: ATP synthase epsilon chain (142 aa).

The protein belongs to the ATPase epsilon chain family. As to quaternary structure, F-type ATPases have 2 components, CF(1) - the catalytic core - and CF(0) - the membrane proton channel. CF(1) has five subunits: alpha(3), beta(3), gamma(1), delta(1), epsilon(1). CF(0) has three main subunits: a, b and c.

It localises to the cell inner membrane. Its function is as follows. Produces ATP from ADP in the presence of a proton gradient across the membrane. This Shewanella pealeana (strain ATCC 700345 / ANG-SQ1) protein is ATP synthase epsilon chain.